Consider the following 558-residue polypeptide: SPATS2-like protein (558 aa).

At Ala2 the chain carries N-acetylalanine. Residues Gly63 to Gln79 are compositionally biased toward basic residues. Disordered regions lie at residues Gly63–Thr148 and Asp161–Pro202. 2 stretches are compositionally biased toward basic and acidic residues: residues Gly80–Glu92 and Gly110–Arg142. Ser120 bears the Phosphoserine mark. Residues Lys279–Leu344 are a coiled coil. The tract at residues Lys383–Ala514 is disordered. Residues Asp416–Asn433 are compositionally biased toward polar residues. Residue Ser455 is modified to Phosphoserine. Basic residues predominate over residues His469–Gly485.

It belongs to the SPATS2 family.

The protein localises to the cytoplasm. It localises to the nucleus. The protein resides in the nucleolus. This Rattus norvegicus (Rat) protein is SPATS2-like protein (Spats2l).